The following is a 172-amino-acid chain: Epithelial membrane protein 2 (172 aa).

The next 4 helical transmembrane spans lie at M1–I21, T72–F92, F100–V120, and F148–L168.

The protein belongs to the PMP-22/EMP/MP20 family. Interacts with PTK2; regulates PTK2 activation and localization. Interacts with ITGB3; regulates the levels of the heterodimer ITGA5-ITGB3 integrin surface expression. Interacts with P2RX7 (via C-terminus). Interacts with ITGB1; the interaction may be direct or indirect and ITGB1 has a heterodimer form. In terms of tissue distribution, expressed in glomeruli.

It localises to the golgi apparatus membrane. The protein localises to the cell membrane. It is found in the apical cell membrane. The protein resides in the membrane raft. Its subcellular location is the cytoplasm. It localises to the nucleus. The protein localises to the perinuclear region. Its function is as follows. Functions as a key regulator of cell membrane composition by regulating protein surface expression. Also, plays a role in regulation of processes including cell migration, cell proliferation, cell contraction and cell adhesion. Regulates transepithelial migration of neutrophils into the alveolar lumen, potentially via mediation of cell surface expression of adhesion markers and lipid raft formation. Negatively regulates caveolae formation by reducing CAV1 expression and CAV1 amount by increasing lysosomal degradation. Facilitates surface trafficking and the formation of lipid rafts bearing GPI-anchor proteins. Regulates surface expression of MHC1 and ICAM1 proteins increasing susceptibility to T-cell mediated cytotoxicity. Regulates the plasma membrane expression of the integrin heterodimers ITGA6-ITGB1, ITGA5-ITGB3 and ITGA5-ITGB1 resulting in modulation of cell-matrix adhesion. Also regulates many processes through PTK2. Regulates blood vessel endothelial cell migration and angiogenesis by regulating VEGF protein expression through PTK2 activation. Regulates cell migration and cell contraction through PTK2 and SRC activation. Regulates focal adhesion density, F-actin conformation and cell adhesion capacity through interaction with PTK2. Positively regulates cell proliferation. Plays a role during cell death and cell blebbing. Promotes angiogenesis and vasculogenesis through induction of VEGFA via a HIF1A-dependent pathway. Also plays a role in embryo implantation by regulating surface trafficking of integrin heterodimer ITGA5-ITGB3. Plays a role in placental angiogenesis and uterine natural killer cell regulation at the maternal-fetal placental interface, however not required in the maternal tissues for a viable pregnancy. Involved in the early stages of embryogenic development and cardiogenesis, potentially via regulation of epithelial-mesenchymal transition timing. May play a role in glomerular filtration. The sequence is that of Epithelial membrane protein 2 (Emp2) from Rattus norvegicus (Rat).